We begin with the raw amino-acid sequence, 119 residues long: Protein YdaY (119 aa).

The chain is Protein YdaY (ydaY) from Escherichia coli (strain K12).